Reading from the N-terminus, the 379-residue chain is Cytochrome b (379 aa).

The next 4 helical transmembrane spans lie at 33–53, 77–98, 113–133, and 178–198; these read FGSL…FLAM, WLIR…SIHA, WNIG…GYVL, and FFAF…VHLL. 2 residues coordinate heme b: His-83 and His-97. Heme b contacts are provided by His-182 and His-196. An a ubiquinone-binding site is contributed by His-201. 4 consecutive transmembrane segments (helical) span residues 226–246, 288–308, 320–340, and 347–367; these read IKDL…ALFF, LGGV…PLLN, ITQT…WIGG, and FTMI…ILMP.

This sequence belongs to the cytochrome b family. The cytochrome bc1 complex contains 11 subunits: 3 respiratory subunits (MT-CYB, CYC1 and UQCRFS1), 2 core proteins (UQCRC1 and UQCRC2) and 6 low-molecular weight proteins (UQCRH/QCR6, UQCRB/QCR7, UQCRQ/QCR8, UQCR10/QCR9, UQCR11/QCR10 and a cleavage product of UQCRFS1). This cytochrome bc1 complex then forms a dimer. Requires heme b as cofactor.

Its subcellular location is the mitochondrion inner membrane. In terms of biological role, component of the ubiquinol-cytochrome c reductase complex (complex III or cytochrome b-c1 complex) that is part of the mitochondrial respiratory chain. The b-c1 complex mediates electron transfer from ubiquinol to cytochrome c. Contributes to the generation of a proton gradient across the mitochondrial membrane that is then used for ATP synthesis. The sequence is that of Cytochrome b (MT-CYB) from Thaptomys nigrita (Blackish grass mouse).